The following is a 501-amino-acid chain: Ribose import ATP-binding protein RbsA 1 (501 aa).

ABC transporter domains are found at residues 5–241 (LQLK…VGRK) and 252–495 (APGD…VGKL). ATP is bound at residue 37–44 (GENGAGKS).

It belongs to the ABC transporter superfamily. Ribose importer (TC 3.A.1.2.1) family. In terms of assembly, the complex is composed of an ATP-binding protein (RbsA), two transmembrane proteins (RbsC) and a solute-binding protein (RbsB).

The protein localises to the cell inner membrane. It carries out the reaction D-ribose(out) + ATP + H2O = D-ribose(in) + ADP + phosphate + H(+). Its function is as follows. Part of the ABC transporter complex RbsABC involved in ribose import. Responsible for energy coupling to the transport system. The sequence is that of Ribose import ATP-binding protein RbsA 1 from Escherichia coli O157:H7.